A 295-amino-acid polypeptide reads, in one-letter code: Protein shisa-2 homolog (295 aa).

The signal sequence occupies residues 1-33 (MWGARRSSVSSSWNAASLLQLLLAALLAAGARA). The Extracellular portion of the chain corresponds to 34–110 (SGEYCHGWLD…RADKDGPDGS (77 aa)). Residues 87–108 (GCDNDRQQGAGEPGRADKDGPD) are disordered. Residues 111 to 131 (AVPIYVPFLIVGSVFVAFIIL) traverse the membrane as a helical segment. Residues 132 to 295 (GSLVAACCCR…EQKMYPAVTV (164 aa)) lie on the Cytoplasmic side of the membrane. The interval 168-205 (PSASTSRGSSSRQSSTAASSSSSANSGARAPPTRSQTN) is disordered. Residues 169–197 (SASTSRGSSSRQSSTAASSSSSANSGARA) are compositionally biased toward low complexity.

It belongs to the shisa family.

It localises to the endoplasmic reticulum membrane. Plays an essential role in the maturation of presomitic mesoderm cells by individual attenuation of both FGF and WNT signaling. In Homo sapiens (Human), this protein is Protein shisa-2 homolog (SHISA2).